Here is a 788-residue protein sequence, read N- to C-terminus: Endonuclease MutS2 (788 aa).

ATP is bound at residue 332–339 (GPNTGGKT). Positions 713–788 (IDLRGLDSEE…GTGVTVVELK (76 aa)) constitute a Smr domain.

It belongs to the DNA mismatch repair MutS family. MutS2 subfamily. In terms of assembly, homodimer. Binds to stalled ribosomes, contacting rRNA.

In terms of biological role, endonuclease that is involved in the suppression of homologous recombination and thus may have a key role in the control of bacterial genetic diversity. Acts as a ribosome collision sensor, splitting the ribosome into its 2 subunits. Detects stalled/collided 70S ribosomes which it binds and splits by an ATP-hydrolysis driven conformational change. Acts upstream of the ribosome quality control system (RQC), a ribosome-associated complex that mediates the extraction of incompletely synthesized nascent chains from stalled ribosomes and their subsequent degradation. Probably generates substrates for RQC. This chain is Endonuclease MutS2, found in Clostridium acetobutylicum (strain ATCC 824 / DSM 792 / JCM 1419 / IAM 19013 / LMG 5710 / NBRC 13948 / NRRL B-527 / VKM B-1787 / 2291 / W).